Consider the following 38-residue polypeptide: Photosystem II reaction center protein L (38 aa).

Residues 17–37 (SLYWGLLLIFVLAVLFSSYIF) form a helical membrane-spanning segment.

The protein belongs to the PsbL family. PSII is composed of 1 copy each of membrane proteins PsbA, PsbB, PsbC, PsbD, PsbE, PsbF, PsbH, PsbI, PsbJ, PsbK, PsbL, PsbM, PsbT, PsbX, PsbY, PsbZ, Psb30/Ycf12, at least 3 peripheral proteins of the oxygen-evolving complex and a large number of cofactors. It forms dimeric complexes.

Its subcellular location is the plastid. It localises to the chloroplast thylakoid membrane. Its function is as follows. One of the components of the core complex of photosystem II (PSII). PSII is a light-driven water:plastoquinone oxidoreductase that uses light energy to abstract electrons from H(2)O, generating O(2) and a proton gradient subsequently used for ATP formation. It consists of a core antenna complex that captures photons, and an electron transfer chain that converts photonic excitation into a charge separation. This subunit is found at the monomer-monomer interface and is required for correct PSII assembly and/or dimerization. This chain is Photosystem II reaction center protein L, found in Ostreococcus tauri.